Reading from the N-terminus, the 148-residue chain is Lysozyme C (148 aa).

The N-terminal stretch at 1 to 18 (MKALLLLGLLLLSVTVQG) is a signal peptide. The 130-residue stretch at 19-148 (KIFERCDLAR…VSQYVRNCGV (130 aa)) folds into the C-type lysozyme domain. Disulfide bonds link Cys-24–Cys-146, Cys-48–Cys-134, Cys-83–Cys-99, and Cys-95–Cys-113. Active-site residues include Glu-53 and Asp-71.

Belongs to the glycosyl hydrolase 22 family. In terms of assembly, monomer.

It catalyses the reaction Hydrolysis of (1-&gt;4)-beta-linkages between N-acetylmuramic acid and N-acetyl-D-glucosamine residues in a peptidoglycan and between N-acetyl-D-glucosamine residues in chitodextrins.. Its function is as follows. Lysozymes have primarily a bacteriolytic function; those in tissues and body fluids are associated with the monocyte-macrophage system and enhance the activity of immunoagents. The chain is Lysozyme C (LYZ) from Halichoerus grypus (Gray seal).